We begin with the raw amino-acid sequence, 324 residues long: CIMIP2 protein GA14893 (324 aa).

It belongs to the CIMIP2 family.

It localises to the cytoplasm. The protein resides in the cytoskeleton. The protein localises to the cilium axoneme. Its function is as follows. Probable microtubule inner protein (MIP) part of the dynein-decorated doublet microtubules (DMTs) in cilium axoneme. The sequence is that of CIMIP2 protein GA14893 from Drosophila pseudoobscura pseudoobscura (Fruit fly).